The primary structure comprises 242 residues: Caffeoyl-CoA O-methyltransferase 2 (242 aa).

A substrate-binding site is contributed by Lys-16. S-adenosyl-L-methionine is bound by residues Thr-58, Glu-80, 82–83 (GV), Ser-88, Asp-106, and Ala-135. Asp-158 lines the substrate pocket. Asp-158 contributes to the a divalent metal cation binding site. Asp-160 is an S-adenosyl-L-methionine binding site. Asp-184 and Asn-185 together coordinate a divalent metal cation. Residue Asn-189 participates in substrate binding.

The protein belongs to the class I-like SAM-binding methyltransferase superfamily. Cation-dependent O-methyltransferase family. CCoAMT subfamily. Requires Mg(2+) as cofactor. In terms of tissue distribution, mostly expressed in the bottom and middle parts of the stems.

The enzyme catalyses (E)-caffeoyl-CoA + S-adenosyl-L-methionine = (E)-feruloyl-CoA + S-adenosyl-L-homocysteine + H(+). Its pathway is aromatic compound metabolism; phenylpropanoid biosynthesis. Methylates caffeoyl-CoA to feruloyl-CoA and 5-hydroxyferuloyl-CoA to sinapoyl-CoA. Plays a role in the synthesis of feruloylated polysaccharides. Involved in the reinforcement of the plant cell wall. Also involved in the responding to wounding or pathogen challenge by the increased formation of cell wall-bound ferulic acid polymers. Methylates 5-hydroxyferulolyl-CoA more efficiently than caffeoyl-CoA. The sequence is that of Caffeoyl-CoA O-methyltransferase 2 (CCOAOMT2) from Nicotiana tabacum (Common tobacco).